Here is a 185-residue protein sequence, read N- to C-terminus: Threonylcarbamoyl-AMP synthase (185 aa).

The YrdC-like domain occupies 1–185 (MKNFEQVLKA…AKTSQILRQG (185 aa)). Residues 163-185 (ETSGRNKPSEIRDAKTSQILRQG) form a disordered region. A compositionally biased stretch (basic and acidic residues) spans 164 to 177 (TSGRNKPSEIRDAK).

Belongs to the SUA5 family. TsaC subfamily.

Its subcellular location is the cytoplasm. The enzyme catalyses L-threonine + hydrogencarbonate + ATP = L-threonylcarbamoyladenylate + diphosphate + H2O. Its function is as follows. Required for the formation of a threonylcarbamoyl group on adenosine at position 37 (t(6)A37) in tRNAs that read codons beginning with adenine. Catalyzes the conversion of L-threonine, HCO(3)(-)/CO(2) and ATP to give threonylcarbamoyl-AMP (TC-AMP) as the acyladenylate intermediate, with the release of diphosphate. The sequence is that of Threonylcarbamoyl-AMP synthase from Vibrio campbellii (strain ATCC BAA-1116).